We begin with the raw amino-acid sequence, 545 residues long: ATP synthase subunit alpha (545 aa).

173 to 180 contributes to the ATP binding site; that stretch reads GDRQTGKT.

The protein belongs to the ATPase alpha/beta chains family. F-type ATPases have 2 components, CF(1) - the catalytic core - and CF(0) - the membrane proton channel. CF(1) has five subunits: alpha(3), beta(3), gamma(1), delta(1), epsilon(1). CF(0) has three main subunits: a(1), b(2) and c(9-12). The alpha and beta chains form an alternating ring which encloses part of the gamma chain. CF(1) is attached to CF(0) by a central stalk formed by the gamma and epsilon chains, while a peripheral stalk is formed by the delta and b chains.

The protein resides in the cell membrane. It carries out the reaction ATP + H2O + 4 H(+)(in) = ADP + phosphate + 5 H(+)(out). Its function is as follows. Produces ATP from ADP in the presence of a proton gradient across the membrane. The alpha chain is a regulatory subunit. The polypeptide is ATP synthase subunit alpha (Clavibacter michiganensis subsp. michiganensis (strain NCPPB 382)).